The following is a 501-amino-acid chain: Adenylosuccinate synthetase 2, chloroplastic (501 aa).

GTP is bound by residues 87 to 93 (GDEGKGK) and 115 to 117 (GHT). The Proton acceptor role is filled by Asp88. The Mg(2+) site is built by Asp88 and Gly115. IMP is bound by residues 88-91 (DEGK), 113-116 (NAGH), Thr205, Arg219, Gln300, Thr315, and Arg379. The active-site Proton donor is His116. 375 to 381 (NITGRPR) serves as a coordination point for substrate. Residues Arg381, 407-409 (KLD), and 490-492 (GIG) each bind GTP.

This sequence belongs to the adenylosuccinate synthetase family. As to quaternary structure, homodimer. Mg(2+) is required as a cofactor.

It is found in the plastid. Its subcellular location is the chloroplast. The catalysed reaction is IMP + L-aspartate + GTP = N(6)-(1,2-dicarboxyethyl)-AMP + GDP + phosphate + 2 H(+). It functions in the pathway purine metabolism; AMP biosynthesis via de novo pathway; AMP from IMP: step 1/2. Its function is as follows. Plays an important role in the de novo pathway and in the salvage pathway of purine nucleotide biosynthesis. Catalyzes the first committed step in the biosynthesis of AMP from IMP. This is Adenylosuccinate synthetase 2, chloroplastic from Capsicum frutescens (Cayenne pepper).